A 601-amino-acid polypeptide reads, in one-letter code: MTTRTIDNIRNFSIVAHIDHGKSTLADRLIQTTGTVALRDMSEQMLDSMDIEKERGITIKAQTVRLEYRAEDGKDYILNLMDTPGHVDFAYEVSRSLAACEGSLLVVDASQGVEAQTLANVYQALDANHEIVPVLNKVDLPAAEPDRVKEQIEEVIGLDASEAVPISAKTGLNIEAVLEAIVKRLPAPKGDREAPLKALLVDSWYDVYLGVVVLVRIIDGVLKKGMTIRMMGADAAYGVDRIGVFRPKMADIGELGPGEVGFFTGSIKEVADTRVGDTITEDKRQTTQMLAGFKEVQAVVFCGLFPVDAADFESLRGAMGKLRLNDASFSYEMETSAALGFGFRCGFLGLLHLEIIQERLEREFNLDLISTAPSVVYRLLMRDGELKELHNPADMPDPMKIETVEEPWIRATILTPDEYLGGVLKLCQDRRGIQIDLNYVGKRAMVVYDLPLNEVVFDFYDRLKSISKGYASFDYHVSDYREGDLVKMSILVNAEPVDALSMLVHRTRAESRGRAMCEKLKDLIPRHLFQIPVQAAIGGKIIARETIRALSKDVTAKCYGGDISRKRKLLDKQKEGKKRMRQFGRVEIPQEAFIAALKMDD.

The region spanning 7–189 (DNIRNFSIVA…AIVKRLPAPK (183 aa)) is the tr-type G domain. GTP is bound by residues 19–24 (DHGKST) and 136–139 (NKVD).

Belongs to the TRAFAC class translation factor GTPase superfamily. Classic translation factor GTPase family. LepA subfamily.

The protein localises to the cell inner membrane. The catalysed reaction is GTP + H2O = GDP + phosphate + H(+). Required for accurate and efficient protein synthesis under certain stress conditions. May act as a fidelity factor of the translation reaction, by catalyzing a one-codon backward translocation of tRNAs on improperly translocated ribosomes. Back-translocation proceeds from a post-translocation (POST) complex to a pre-translocation (PRE) complex, thus giving elongation factor G a second chance to translocate the tRNAs correctly. Binds to ribosomes in a GTP-dependent manner. This chain is Elongation factor 4, found in Methylorubrum extorquens (strain CM4 / NCIMB 13688) (Methylobacterium extorquens).